The sequence spans 548 residues: Chaperonin GroEL (548 aa).

ATP is bound by residues 29–32 (TMGP), Lys50, 86–90 (DGTTT), Gly414, 478–480 (NAA), and Asp494.

This sequence belongs to the chaperonin (HSP60) family. As to quaternary structure, forms a cylinder of 14 subunits composed of two heptameric rings stacked back-to-back. Interacts with the co-chaperonin GroES.

The protein localises to the cytoplasm. It carries out the reaction ATP + H2O + a folded polypeptide = ADP + phosphate + an unfolded polypeptide.. Together with its co-chaperonin GroES, plays an essential role in assisting protein folding. The GroEL-GroES system forms a nano-cage that allows encapsulation of the non-native substrate proteins and provides a physical environment optimized to promote and accelerate protein folding. Its function is as follows. May play a protective role against the defense mechanisms generated by the infected macrophages. In Legionella pneumophila, this protein is Chaperonin GroEL.